The following is a 411-amino-acid chain: Na(+)-translocating NADH-quinone reductase subunit F (411 aa).

Residues 6–26 (AIGGVAMFTLIIMSFVAIILA) traverse the membrane as a helical segment. Residues 35–129 (GDVTIHINDN…DMKIEIDPEF (95 aa)) enclose the 2Fe-2S ferredoxin-type domain. [2Fe-2S] cluster is bound by residues Cys72, Cys78, Cys81, and Cys113. The 142-residue stretch at 132-273 (VQKWECEVIS…SGPYGEFFAK (142 aa)) folds into the FAD-binding FR-type domain.

This sequence belongs to the NqrF family. As to quaternary structure, composed of six subunits; NqrA, NqrB, NqrC, NqrD, NqrE and NqrF. The cofactor is [2Fe-2S] cluster. FAD is required as a cofactor.

The protein resides in the cell inner membrane. The catalysed reaction is a ubiquinone + n Na(+)(in) + NADH + H(+) = a ubiquinol + n Na(+)(out) + NAD(+). Functionally, NQR complex catalyzes the reduction of ubiquinone-1 to ubiquinol by two successive reactions, coupled with the transport of Na(+) ions from the cytoplasm to the periplasm. The first step is catalyzed by NqrF, which accepts electrons from NADH and reduces ubiquinone-1 to ubisemiquinone by a one-electron transfer pathway. In Psychrobacter arcticus (strain DSM 17307 / VKM B-2377 / 273-4), this protein is Na(+)-translocating NADH-quinone reductase subunit F.